Here is a 450-residue protein sequence, read N- to C-terminus: Grayanic acid biosynthesis cluster O-methyltransferase (450 aa).

Asp-254 provides a ligand contact to S-adenosyl-L-methionine. His-301 functions as the Proton acceptor in the catalytic mechanism.

This sequence belongs to the class I-like SAM-binding methyltransferase superfamily. Cation-independent O-methyltransferase family. COMT subfamily.

The protein operates within secondary metabolite biosynthesis. In terms of biological role, non-reducing polyketide synthase; part of the gene cluster that mediates the biosynthesis of orcinol depsidone grayanic acid (GRA), the only major secondary metabolite known in C.grayi. The first step consists in the ring and depside synthesis by PKS16 leading to 4-O-demethylsphaerophorin, involving different orcinol-like rings, one with acetyl CoA and the other with octanoyl CoA as the starter. Further depsidone formation by the GRA cluster-specific cytochrome P450 leads to 4-O-demethylgrayanic acid. Finally, the cluster specific O-methyltransferase probably converts the 4-O-demethylgrayanic acid into grayanic acid. In Cladonia grayi (Gray's cup lichen), this protein is Grayanic acid biosynthesis cluster O-methyltransferase.